Consider the following 421-residue polypeptide: EQQKYLNAKKYVKLVLVADYIMYLKYGRSLTTLRTRMYDIVNIINLIFQRMNIHVALVGLEIWSNRDKIIVQSSADVTLDLFAKWRETDLLKRKSHDNAQLLTGINFNGPTAGLAYLSGICKPMYSAGIVQDHNKVHHLVAIAMAHEMGHNLGMDHDKDTCTCGARSCVMAGTLSCEPSYLFSDCSRREHRAFLIKDMPQCILEKPLRTDVVSPPVCGNYFVEVGEECDCGSPATCRDTCCDAATCKLRQGAQCAEGLCCDQCRFKGAGTECRAAKDECDMADLCTGRSAECTDRFQRNGQPCQNNNGYCYNGTCPIMRDQCIALFGPNAAVSQDACFQFNLQGNHYGYCRKEQNTKIACEPQDVKCGRLYCFPSSPATKNPCNIHYSPNDEDKGMVLPGTKCADGKACSNGRCVDVTTPY.

The Peptidase M12B domain maps to 10–206 (KYVKLVLVAD…DMPQCILEKP (197 aa)). 3 cysteine pairs are disulfide-bonded: cysteine 121–cysteine 201, cysteine 161–cysteine 185, and cysteine 163–cysteine 168. Histidine 146 is a binding site for Zn(2+). Residue glutamate 147 is part of the active site. Positions 150 and 156 each coordinate Zn(2+). The Disintegrin domain occupies 214-299 (PPVCGNYFVE…AECTDRFQRN (86 aa)). 6 residues coordinate Ca(2+): valine 216, asparagine 219, phenylalanine 221, glutamate 223, glutamate 226, and aspartate 229. Disulfide bonds link cysteine 217–cysteine 246, cysteine 228–cysteine 241, cysteine 230–cysteine 236, cysteine 240–cysteine 263, cysteine 254–cysteine 260, cysteine 259–cysteine 285, cysteine 272–cysteine 292, cysteine 279–cysteine 310, cysteine 303–cysteine 315, cysteine 322–cysteine 372, cysteine 337–cysteine 383, cysteine 350–cysteine 360, cysteine 367–cysteine 409, and cysteine 403–cysteine 414. Residues 278–280 (ECD) carry the D/ECD-tripeptide motif. Ca(2+) contacts are provided by aspartate 280, methionine 281, aspartate 283, aspartate 294, and arginine 295. N-linked (GlcNAc...) asparagine glycosylation is present at asparagine 312.

Belongs to the venom metalloproteinase (M12B) family. P-III subfamily. P-IIIc sub-subfamily. In terms of assembly, homodimer; disulfide-linked. Zn(2+) serves as cofactor. Expressed by the venom gland.

The protein resides in the secreted. Snake venom zinc metalloprotease that induces apoptosis in vascular endothelial cells (VEC), without degrading the extracellular matrix (it cannot cleave collagen) or inhibiting adhesion of VEC. Has also fibrinogenolytic and hemorrhagic activities. The chain is Zinc metalloproteinase-disintegrin-like lachestatin-2 from Lachesis muta rhombeata (Bushmaster).